Reading from the N-terminus, the 349-residue chain is Anthranilate phosphoribosyltransferase (349 aa).

5-phospho-alpha-D-ribose 1-diphosphate is bound by residues glycine 82, 85–86 (GD), 92–95 (NVST), 110–118 (KHGNRGVSS), and serine 122. Glycine 82 is an anthranilate binding site. Serine 94 is a binding site for Mg(2+). Anthranilate is bound at residue asparagine 113. Anthranilate is bound at residue arginine 168. Aspartate 227 and glutamate 228 together coordinate Mg(2+).

The protein belongs to the anthranilate phosphoribosyltransferase family. As to quaternary structure, homodimer. Mg(2+) serves as cofactor.

It carries out the reaction N-(5-phospho-beta-D-ribosyl)anthranilate + diphosphate = 5-phospho-alpha-D-ribose 1-diphosphate + anthranilate. It functions in the pathway amino-acid biosynthesis; L-tryptophan biosynthesis; L-tryptophan from chorismate: step 2/5. Functionally, catalyzes the transfer of the phosphoribosyl group of 5-phosphorylribose-1-pyrophosphate (PRPP) to anthranilate to yield N-(5'-phosphoribosyl)-anthranilate (PRA). The chain is Anthranilate phosphoribosyltransferase from Acinetobacter baylyi (strain ATCC 33305 / BD413 / ADP1).